Consider the following 702-residue polypeptide: Elongation factor G (702 aa).

One can recognise a tr-type G domain in the interval 8-290 (ERYRNIGISA…GVVEYLPSPV (283 aa)). Residues 17–24 (AHIDAGKT), 88–92 (DTPGH), and 142–145 (NKMD) each bind GTP.

This sequence belongs to the TRAFAC class translation factor GTPase superfamily. Classic translation factor GTPase family. EF-G/EF-2 subfamily.

The protein localises to the cytoplasm. Its function is as follows. Catalyzes the GTP-dependent ribosomal translocation step during translation elongation. During this step, the ribosome changes from the pre-translocational (PRE) to the post-translocational (POST) state as the newly formed A-site-bound peptidyl-tRNA and P-site-bound deacylated tRNA move to the P and E sites, respectively. Catalyzes the coordinated movement of the two tRNA molecules, the mRNA and conformational changes in the ribosome. The polypeptide is Elongation factor G (Janthinobacterium sp. (strain Marseille) (Minibacterium massiliensis)).